The primary structure comprises 206 residues: Small ribosomal subunit protein uS4 (206 aa).

Residues 96–156 form the S4 RNA-binding domain; sequence CRLDNVVYRM…EKSKNQLRIA (61 aa).

Belongs to the universal ribosomal protein uS4 family. In terms of assembly, part of the 30S ribosomal subunit. Contacts protein S5. The interaction surface between S4 and S5 is involved in control of translational fidelity.

In terms of biological role, one of the primary rRNA binding proteins, it binds directly to 16S rRNA where it nucleates assembly of the body of the 30S subunit. Its function is as follows. With S5 and S12 plays an important role in translational accuracy. The polypeptide is Small ribosomal subunit protein uS4 (Ectopseudomonas mendocina (strain ymp) (Pseudomonas mendocina)).